The sequence spans 411 residues: LL-diaminopimelate aminotransferase (411 aa).

Residues Tyr-15 and Gly-42 each coordinate substrate. Pyridoxal 5'-phosphate contacts are provided by residues Tyr-72, 108-109 (AK), Tyr-132, Asn-187, Tyr-218, and 246-248 (SFS). Substrate is bound by residues Lys-109, Tyr-132, and Asn-187. The residue at position 249 (Lys-249) is an N6-(pyridoxal phosphate)lysine. Residues Arg-257 and Asn-292 each contribute to the pyridoxal 5'-phosphate site. Substrate-binding residues include Asn-292 and Arg-388.

This sequence belongs to the class-I pyridoxal-phosphate-dependent aminotransferase family. LL-diaminopimelate aminotransferase subfamily. Homodimer. The cofactor is pyridoxal 5'-phosphate.

It carries out the reaction (2S,6S)-2,6-diaminopimelate + 2-oxoglutarate = (S)-2,3,4,5-tetrahydrodipicolinate + L-glutamate + H2O + H(+). It functions in the pathway amino-acid biosynthesis; L-lysine biosynthesis via DAP pathway; LL-2,6-diaminopimelate from (S)-tetrahydrodipicolinate (aminotransferase route): step 1/1. In terms of biological role, involved in the synthesis of meso-diaminopimelate (m-DAP or DL-DAP), required for both lysine and peptidoglycan biosynthesis. Catalyzes the direct conversion of tetrahydrodipicolinate to LL-diaminopimelate. This chain is LL-diaminopimelate aminotransferase, found in Rippkaea orientalis (strain PCC 8801 / RF-1) (Cyanothece sp. (strain PCC 8801)).